A 187-amino-acid polypeptide reads, in one-letter code: UPF0301 protein Sputcn32_2681 (187 aa).

The protein belongs to the UPF0301 (AlgH) family.

This chain is UPF0301 protein Sputcn32_2681, found in Shewanella putrefaciens (strain CN-32 / ATCC BAA-453).